The following is a 416-amino-acid chain: Probable F-box protein At5g47300 (416 aa).

The region spanning 40-86 is the F-box domain; the sequence is TLMLSDLPGDLLEEILCRVPATSLKQLRSTCKQWNNLFNNGRFTRKH.

The chain is Probable F-box protein At5g47300 from Arabidopsis thaliana (Mouse-ear cress).